Here is a 363-residue protein sequence, read N- to C-terminus: Disease resistance protein RBA1 (363 aa).

Positions 12 to 175 constitute a TIR domain; that stretch reads PVPKVFLSFR…EIVKEVERVL (164 aa). NAD(+) contacts are provided by residues 21–26 and glycine 53; that span reads RGEEIR. The active site involves glutamate 86.

In terms of assembly, homooligomer; homooligomerization is required for activity.

Its subcellular location is the cytoplasm. It localises to the nucleus. It is found in the nucleoplasm. It catalyses the reaction NAD(+) + H2O = ADP-D-ribose + nicotinamide + H(+). The catalysed reaction is NADP(+) + H2O = ADP-D-ribose 2'-phosphate + nicotinamide + H(+). Functionally, disease resistance (R) protein that specifically recognizes the HopBA1 type III effector protein from P.syringae, and triggers cell death. Acts as a NAD(+) hydrolase (NADase): in response to pathogen-recognition, catalyzes cleavage of NAD(+) into ADP-D-ribose (ADPR) and nicotinamide; NAD(+) cleavage triggering a defense system that promotes cell death. In addition to ADPR, also generates a cyclization variant of cyclic ADPR (cADPR), termed v-cADPR, for which the cyclizing bond is unknown. Also able to hydrolyze NADP(+), but not other NAD(+)-related molecules. In Arabidopsis thaliana (Mouse-ear cress), this protein is Disease resistance protein RBA1.